A 248-amino-acid polypeptide reads, in one-letter code: B-box zinc finger protein 24 (248 aa).

8 residues coordinate Zn(2+): Cys-5, Cys-8, Cys-28, His-33, Cys-57, Cys-60, Cys-80, and His-85. A B box-type 1; atypical zinc finger spans residues 5–47 (CDVCEKAPATVICCADEAALCPQCDIEIHAANKLASKHQRLHL). The B box-type 2; atypical zinc-finger motif lies at 57–99 (CDICQEKAAFIFCVEDRALLCRDCDESIHVANSRSANHQRFLA). Residues 115–148 (IEKNQPEPSNNQQKANQIPAKSTSQQQQQPSSAT) form a disordered region. Over residues 120–130 (PEPSNNQQKAN) the composition is skewed to polar residues. The segment covering 131-148 (QIPAKSTSQQQQQPSSAT) has biased composition (low complexity). The short motif at 226–229 (KKPR) is the Nuclear localization signal element. Residues 236-248 (DDDEEHFIVPDLG) are interaction with COP1.

In terms of assembly, interacts with COP1 WD40 domain. Interacts with HY5 and HYH. Interacts with RCD1 and TRP4. COP1-mediated ubiquitination and subsequent proteasomal degradation of BBX24/STO occurs in the dark. As to expression, high expression in leaves and lower in roots and flowers.

The protein resides in the nucleus. Acts as a negative regulator of seedling photomorphogenesis and light-regulated inhibition of hypocotyl elongation. BBX24/STO and BBX25/STH function as transcriptional corepressors of HY5 activity, leading to the down-regulation of BBX22 expression. BBX24/STO acts additively with BBX25/STH during de-etiolation and the hypocotyl shade avoidance response. Functions as a negative regulator of photomorphogenic UV-B responses by interacting with both COP1 and HY5. May act as a transcription factor in the salt-stress response. This chain is B-box zinc finger protein 24, found in Arabidopsis thaliana (Mouse-ear cress).